The chain runs to 428 residues: Adenylosuccinate synthetase (428 aa).

GTP is bound by residues 12–18 (GDEGKGK) and 40–42 (GHT). Residue D13 is the Proton acceptor of the active site. The Mg(2+) site is built by D13 and G40. IMP contacts are provided by residues 13–16 (DEGK), 38–41 (NAGH), T130, R144, Q225, T240, and R304. H41 acts as the Proton donor in catalysis. 300–306 (VTTGRAR) provides a ligand contact to substrate. Residues R306, 332 to 334 (KID), and 414 to 416 (SVG) each bind GTP.

It belongs to the adenylosuccinate synthetase family. In terms of assembly, homodimer. It depends on Mg(2+) as a cofactor.

The protein resides in the cytoplasm. It carries out the reaction IMP + L-aspartate + GTP = N(6)-(1,2-dicarboxyethyl)-AMP + GDP + phosphate + 2 H(+). It functions in the pathway purine metabolism; AMP biosynthesis via de novo pathway; AMP from IMP: step 1/2. Plays an important role in the de novo pathway of purine nucleotide biosynthesis. Catalyzes the first committed step in the biosynthesis of AMP from IMP. In Clostridium acetobutylicum (strain ATCC 824 / DSM 792 / JCM 1419 / IAM 19013 / LMG 5710 / NBRC 13948 / NRRL B-527 / VKM B-1787 / 2291 / W), this protein is Adenylosuccinate synthetase.